The sequence spans 324 residues: CIMIP2 protein GA14893 (324 aa).

This sequence belongs to the CIMIP2 family.

It is found in the cytoplasm. The protein resides in the cytoskeleton. It localises to the cilium axoneme. Its function is as follows. Probable microtubule inner protein (MIP) part of the dynein-decorated doublet microtubules (DMTs) in cilium axoneme. The sequence is that of CIMIP2 protein GA14893 from Drosophila pseudoobscura pseudoobscura (Fruit fly).